The following is a 702-amino-acid chain: Glucosidase 2 subunit beta (702 aa).

The N-terminal stretch at 1–20 (MVSMFSLFLLLIEQSPLVAS) is a signal peptide. Asparagine 145 carries an N-linked (GlcNAc...) asparagine glycan. Residues 163–228 (SYREGKEALE…LRGEYFNQLS (66 aa)) are a coiled coil. N-linked (GlcNAc...) asparagine glycans are attached at residues asparagine 240 and asparagine 358. Residues 435 to 457 (PKVLPPDAVESEQDTNSDHIGTS) are disordered. Positions 478–517 (KDLVSLEKRFRSCESQVSLLENELKQKMDYKKLLDETEDE) form a coiled coil. Residues asparagine 520 and asparagine 525 are each glycosylated (N-linked (GlcNAc...) asparagine). The region spanning 537 to 689 (SYCLDDILDN…DVVGPLGCNK (153 aa)) is the MRH domain. 3 cysteine pairs are disulfide-bonded: cysteine 539–cysteine 552, cysteine 646–cysteine 675, and cysteine 660–cysteine 687. N-linked (GlcNAc...) asparagine glycosylation is found at asparagine 688 and asparagine 699.

In terms of assembly, heterodimer of a catalytic subunit alpha (ROT2) and a subunit beta (GTB1).

Its subcellular location is the endoplasmic reticulum. Subunit of glucosidase 2, which cleaves sequentially the 2 innermost alpha-1,3-linked glucose residues from the Glc(2)Man(9)GlcNAc(2) oligosaccharide precursor of immature glycoproteins. Specifically required for the cleavage of the final glucose. The sequence is that of Glucosidase 2 subunit beta (GTB1) from Saccharomyces cerevisiae (strain ATCC 204508 / S288c) (Baker's yeast).